The chain runs to 160 residues: Putative UPF0479 protein YLR466C-A (160 aa).

The next 2 membrane-spanning stretches (helical) occupy residues 39–59 and 136–156; these read IVFC…KVLQ and VPMI…ISQH.

Belongs to the UPF0479 family.

The protein localises to the membrane. The protein is Putative UPF0479 protein YLR466C-A of Saccharomyces cerevisiae (strain ATCC 204508 / S288c) (Baker's yeast).